A 441-amino-acid polypeptide reads, in one-letter code: ATP-dependent protease ATPase subunit HslU (441 aa).

ATP is bound by residues I18, 60–65 (GVGKTE), D254, E319, and R391.

Belongs to the ClpX chaperone family. HslU subfamily. As to quaternary structure, a double ring-shaped homohexamer of HslV is capped on each side by a ring-shaped HslU homohexamer. The assembly of the HslU/HslV complex is dependent on binding of ATP.

Its subcellular location is the cytoplasm. ATPase subunit of a proteasome-like degradation complex; this subunit has chaperone activity. The binding of ATP and its subsequent hydrolysis by HslU are essential for unfolding of protein substrates subsequently hydrolyzed by HslV. HslU recognizes the N-terminal part of its protein substrates and unfolds these before they are guided to HslV for hydrolysis. In Actinobacillus succinogenes (strain ATCC 55618 / DSM 22257 / CCUG 43843 / 130Z), this protein is ATP-dependent protease ATPase subunit HslU.